We begin with the raw amino-acid sequence, 568 residues long: 2-succinyl-5-enolpyruvyl-6-hydroxy-3-cyclohexene-1-carboxylate synthase (568 aa).

It belongs to the TPP enzyme family. MenD subfamily. Homodimer. It depends on Mg(2+) as a cofactor. Mn(2+) serves as cofactor. The cofactor is thiamine diphosphate.

The catalysed reaction is isochorismate + 2-oxoglutarate + H(+) = 5-enolpyruvoyl-6-hydroxy-2-succinyl-cyclohex-3-ene-1-carboxylate + CO2. It participates in quinol/quinone metabolism; 1,4-dihydroxy-2-naphthoate biosynthesis; 1,4-dihydroxy-2-naphthoate from chorismate: step 2/7. Its pathway is quinol/quinone metabolism; menaquinone biosynthesis. Functionally, catalyzes the thiamine diphosphate-dependent decarboxylation of 2-oxoglutarate and the subsequent addition of the resulting succinic semialdehyde-thiamine pyrophosphate anion to isochorismate to yield 2-succinyl-5-enolpyruvyl-6-hydroxy-3-cyclohexene-1-carboxylate (SEPHCHC). The polypeptide is 2-succinyl-5-enolpyruvyl-6-hydroxy-3-cyclohexene-1-carboxylate synthase (Mannheimia succiniciproducens (strain KCTC 0769BP / MBEL55E)).